The sequence spans 136 residues: Small ribosomal subunit protein uS8 (136 aa).

It belongs to the universal ribosomal protein uS8 family. Part of the 30S ribosomal subunit. Contacts proteins S5 and S12.

In terms of biological role, one of the primary rRNA binding proteins, it binds directly to 16S rRNA central domain where it helps coordinate assembly of the platform of the 30S subunit. The polypeptide is Small ribosomal subunit protein uS8 (Sulfurihydrogenibium sp. (strain YO3AOP1)).